The sequence spans 260 residues: Snake venom serine protease serpentokallikrein-1 (260 aa).

An N-terminal signal peptide occupies residues 1 to 18 (MVLIRVLANLLILQLSYA). A propeptide spanning residues 19–24 (QRTSEL) is cleaved from the precursor. The Peptidase S1 domain maps to 25–251 (VIGGDECNIN…HLDWIKSIIA (227 aa)). Cystine bridges form between Cys31–Cys165, Cys52–Cys68, Cys102–Cys258, Cys144–Cys212, Cys176–Cys191, and Cys202–Cys227. His67 serves as the catalytic Charge relay system. Asn81 and Asn105 each carry an N-linked (GlcNAc...) asparagine glycan. The Charge relay system role is filled by Asp112. Asn156 and Asn172 each carry an N-linked (GlcNAc...) asparagine glycan. Residue Ser206 is the Charge relay system of the active site.

It belongs to the peptidase S1 family. Snake venom subfamily. As to quaternary structure, monomer. As to expression, expressed by the venom gland.

The protein resides in the secreted. Functionally, snake venom serine protease that may act in the hemostasis system of the prey. The protein is Snake venom serine protease serpentokallikrein-1 of Protobothrops mucrosquamatus (Taiwan habu).